Here is a 316-residue protein sequence, read N- to C-terminus: Biotin synthase (316 aa).

In terms of domain architecture, Radical SAM core spans 36-264 (FDNRITLCAI…TATLRICGGR (229 aa)). C53, C57, and C60 together coordinate [4Fe-4S] cluster. Residues C129, C189, and R259 each coordinate [2Fe-2S] cluster.

It belongs to the radical SAM superfamily. Biotin synthase family. Homodimer. [4Fe-4S] cluster is required as a cofactor. [2Fe-2S] cluster serves as cofactor.

It carries out the reaction (4R,5S)-dethiobiotin + (sulfur carrier)-SH + 2 reduced [2Fe-2S]-[ferredoxin] + 2 S-adenosyl-L-methionine = (sulfur carrier)-H + biotin + 2 5'-deoxyadenosine + 2 L-methionine + 2 oxidized [2Fe-2S]-[ferredoxin]. It participates in cofactor biosynthesis; biotin biosynthesis; biotin from 7,8-diaminononanoate: step 2/2. Functionally, catalyzes the conversion of dethiobiotin (DTB) to biotin by the insertion of a sulfur atom into dethiobiotin via a radical-based mechanism. This chain is Biotin synthase, found in Desulfovibrio desulfuricans (strain ATCC 27774 / DSM 6949 / MB).